A 368-amino-acid polypeptide reads, in one-letter code: Core-capsid bridging protein (368 aa).

2 disordered regions span residues 17-49 and 307-340; these read EIYG…DELD and GYRG…QPVL. Positions 22 to 31 are enriched in basic and acidic residues; sequence PKKEEQDYKP. Basic residues-rich tracts occupy residues 32-41 and 314-337; these read RKLKRVKKKK and RPRR…RRRQ.

It belongs to the adenoviridae core-capsid bridging protein family. In terms of assembly, monomer. Homodimer. Exists in equilibrium between monomers and dimers in solution. Interacts with the histone-like nucleoprotein; this interactions bridge the virus core to the capsid. Interacts with core protein X; this interactions bridge the virus core to the capsid. Interacts with the endosome lysis protein VI; this interactions bridge the virus core to the capsid. Interacts with the peripentonal hexons. Interacts with host NPM1; this interaction might play a role in virus assembly. In terms of processing, during virion entry, is ubiquitinated at the nuclear pore complex by host MIB1. This dissociates viral genomic DNA from capsid and allows genome delivery into nucleus for infection.

Its subcellular location is the virion. The protein resides in the host nucleus. It is found in the host nucleolus. Its function is as follows. Associates loosely with the viral DNA to form an outer shell around the nucleoprotein-DNA complex and links it with the capsid by binding the endosome lysis protein. During entry, secures the viral genome in the capsid until it reaches the nuclear pore complex, preventing innate immunity responses. Dissociates from the viral genome at nuclear pore. Might be involved in nuclear capsid assembly of the viral particles through its association with NPM1/nucleophosmin. The polypeptide is Core-capsid bridging protein (Human adenovirus C serotype 5 (HAdV-5)).